Consider the following 601-residue polypeptide: MTVRLSEGAIESLSKGTEVNNPILQCVNIRKIDGGNGVSRFRVMMSDGLHTMSSFMLSTQLNPMAEQNQLATNCVCVLKRSVTNVLKDGRRVVVILDIEVLKSADQMPGKIGDPTPYVEGQSKAPSTAPAPTARPLQPQNGSDGSTYRPSAQSFGKKPMAAPNTPGGSSKVVPIASLNPYQSKWTIRARVTNKSAIRTWSNSRGDGKLFSMELVDESGEIRATGFNNEVDKFFSLIEQGKVFYISKGTLKIANKQFSSLKNDYEMTLNGETSIIPCEDSNDVPMLQCDFVSIADLESREKDTILDVIGVCKNAEDVARIMTKNSREVSKRNIQLIDMSGRVIQLTMWGSDAETFDGSGQPILAIKGARLSDFGGRSLSTLYSSTVMINPDIPEAYKLRGWYDKEGHALDGQSMTELRGPGGGGNTNWKTLAEVKNEHLGHGDKADYFSCIATIVYIRKENCLYQACPSKDCNKKVVDQQNGMFRCEKCDKEFPDFKYRLMLSANIADFGDNQWVTCFQDTAETLLGQNSSYLGQLKDTNEAAFDEVFQHANFNTFVFRNRVKLETYNDESRIKVTVVDAKPVDHREYSKRLIINIRKLAAQ.

A disordered region spans residues 107-172 (MPGKIGDPTP…NTPGGSSKVV (66 aa)). Residues 124–135 (APSTAPAPTARP) show a composition bias toward low complexity. Positions 137-153 (QPQNGSDGSTYRPSAQS) are enriched in polar residues. Positions 184-268 (WTIRARVTNK…LKNDYEMTLN (85 aa)) form a DNA-binding region, OB. At Ser370 the chain carries Phosphoserine. Residues 466–488 (CPSKDCNKKVVDQQNGMFRCEKC) form a C4-type zinc finger.

The protein belongs to the replication factor A protein 1 family. Component of the heterotrimeric canonical replication protein A complex (RPA).

The protein localises to the nucleus. Its subcellular location is the PML body. As part of the heterotrimeric replication protein A complex (RPA/RP-A), binds and stabilizes single-stranded DNA intermediates, that form during DNA replication or upon DNA stress. It prevents their reannealing and in parallel, recruits and activates different proteins and complexes involved in DNA metabolism. Thereby, it plays an essential role both in DNA replication and the cellular response to DNA damage. The protein is Replication protein A 70 kDa DNA-binding subunit (rpa1) of Danio rerio (Zebrafish).